The following is a 126-amino-acid chain: Fluoride-specific ion channel FluC (126 aa).

4 helical membrane-spanning segments follow: residues 1–21, 33–53, 72–92, and 97–117; these read MTAT…RFHA, AVFP…MGVL, VGVL…ALLV, and IGLA…GLFL. 2 residues coordinate Na(+): Gly-76 and Thr-79.

It belongs to the fluoride channel Fluc/FEX (TC 1.A.43) family.

The protein localises to the cell inner membrane. It catalyses the reaction fluoride(in) = fluoride(out). Its activity is regulated as follows. Na(+) is not transported, but it plays an essential structural role and its presence is essential for fluoride channel function. Functionally, fluoride-specific ion channel. Important for reducing fluoride concentration in the cell, thus reducing its toxicity. The polypeptide is Fluoride-specific ion channel FluC (Novosphingobium aromaticivorans (strain ATCC 700278 / DSM 12444 / CCUG 56034 / CIP 105152 / NBRC 16084 / F199)).